Reading from the N-terminus, the 475-residue chain is Flavin-dependent monooxygenase (475 aa).

It belongs to the aromatic-ring hydroxylase family. FAD is required as a cofactor.

It localises to the cytoplasm. The enzyme catalyses a tetracycline + NADPH + O2 + H(+) = an 11a-hydroxytetracycline + NADP(+) + H2O. It catalyses the reaction tetracycline + NADPH + O2 + H(+) = 11a-hydroxytetracycline + NADP(+) + H2O. With respect to regulation, inhibited by anhydrotetracycline. Its function is as follows. An FAD-requiring monooxygenase active on some tetracycline antibiotic derivatives, which leads to their inactivation. Hydroxylates carbon 11a of tetracycline and some analogs. Confers resistance to tetracycline and doxycycline via an oxidoreductase activity; probably monooxygenates the antibiotics. Does not act on tigecycline. The polypeptide is Flavin-dependent monooxygenase (Mycobacteroides abscessus (strain ATCC 19977 / DSM 44196 / CCUG 20993 / CIP 104536 / JCM 13569 / NCTC 13031 / TMC 1543 / L948) (Mycobacterium abscessus)).